The chain runs to 148 residues: UPF0540 protein At1g62000 (148 aa).

The N-terminal stretch at 1-21 (MNATKFVVLLVIGILCAIVTA) is a signal peptide. Low complexity predominate over residues 123–132 (RANGKVASAS). The segment at 123–148 (RANGKVASASRVKGSSEKKKGKGKKD) is disordered.

It belongs to the UPF0540 family.

The polypeptide is UPF0540 protein At1g62000 (Arabidopsis thaliana (Mouse-ear cress)).